A 486-amino-acid polypeptide reads, in one-letter code: Ribulose bisphosphate carboxylase large chain (486 aa).

2 residues coordinate substrate: Asn125 and Thr175. Lys177 functions as the Proton acceptor in the catalytic mechanism. Substrate is bound at residue Lys179. Lys203, Asp205, and Glu206 together coordinate Mg(2+). Lys203 carries the N6-carboxylysine modification. Residue His295 is the Proton acceptor of the active site. Positions 296, 328, and 380 each coordinate substrate.

The protein belongs to the RuBisCO large chain family. Type I subfamily. As to quaternary structure, heterohexadecamer of 8 large chains and 8 small chains. Mg(2+) is required as a cofactor.

The enzyme catalyses 2 (2R)-3-phosphoglycerate + 2 H(+) = D-ribulose 1,5-bisphosphate + CO2 + H2O. The catalysed reaction is D-ribulose 1,5-bisphosphate + O2 = 2-phosphoglycolate + (2R)-3-phosphoglycerate + 2 H(+). In terms of biological role, ruBisCO catalyzes two reactions: the carboxylation of D-ribulose 1,5-bisphosphate, the primary event in carbon dioxide fixation, as well as the oxidative fragmentation of the pentose substrate. Both reactions occur simultaneously and in competition at the same active site. This Bradyrhizobium diazoefficiens (strain JCM 10833 / BCRC 13528 / IAM 13628 / NBRC 14792 / USDA 110) protein is Ribulose bisphosphate carboxylase large chain.